The primary structure comprises 906 residues: Protein translocase subunit SecA (906 aa).

Residues glutamine 87, 105-109 (GEGKT), and aspartate 512 contribute to the ATP site. A disordered region spans residues 875 to 897 (VTFVRDEQKVGRNDPCPCGSGKK). Residues cysteine 890, cysteine 892, cysteine 901, and histidine 902 each coordinate Zn(2+).

Belongs to the SecA family. As to quaternary structure, monomer and homodimer. Part of the essential Sec protein translocation apparatus which comprises SecA, SecYEG and auxiliary proteins SecDF-YajC and YidC. Zn(2+) is required as a cofactor.

Its subcellular location is the cell inner membrane. The protein localises to the cytoplasm. The enzyme catalyses ATP + H2O + cellular proteinSide 1 = ADP + phosphate + cellular proteinSide 2.. Functionally, part of the Sec protein translocase complex. Interacts with the SecYEG preprotein conducting channel. Has a central role in coupling the hydrolysis of ATP to the transfer of proteins into and across the cell membrane, serving both as a receptor for the preprotein-SecB complex and as an ATP-driven molecular motor driving the stepwise translocation of polypeptide chains across the membrane. This chain is Protein translocase subunit SecA, found in Aeromonas hydrophila subsp. hydrophila (strain ATCC 7966 / DSM 30187 / BCRC 13018 / CCUG 14551 / JCM 1027 / KCTC 2358 / NCIMB 9240 / NCTC 8049).